We begin with the raw amino-acid sequence, 172 residues long: MRKTDRHPVSGANSLWHVYQTVPFLKVVKNFIVIQIARYTPFIGMKNWLYRTFLRMKVGKQTSFALMVMPDIMFPEKISVGTNTIIGYNTTILAHEYLIHEYRIGKVLIGDEVMIGANTTILPGVKIGDGAVVSAGTLVHKDVPDGAFVGGNPMRIIYTKEEMQERLKKSAE.

It belongs to the transferase hexapeptide repeat family.

The polypeptide is Putative acetyltransferase YvoF (yvoF) (Bacillus subtilis (strain 168)).